Here is a 305-residue protein sequence, read N- to C-terminus: Spermatogenesis-associated protein 4 (305 aa).

The Calponin-homology (CH) domain maps to 49 to 155; sequence SRLSRSVLRW…EEVYTLLTHR (107 aa).

It localises to the nucleus. In terms of biological role, may play a role in apoptosis regulation. The chain is Spermatogenesis-associated protein 4 (SPATA4) from Pan troglodytes (Chimpanzee).